A 230-amino-acid polypeptide reads, in one-letter code: Phosphoribosylaminoimidazole-succinocarboxamide synthase (230 aa).

This sequence belongs to the SAICAR synthetase family.

The enzyme catalyses 5-amino-1-(5-phospho-D-ribosyl)imidazole-4-carboxylate + L-aspartate + ATP = (2S)-2-[5-amino-1-(5-phospho-beta-D-ribosyl)imidazole-4-carboxamido]succinate + ADP + phosphate + 2 H(+). The protein operates within purine metabolism; IMP biosynthesis via de novo pathway; 5-amino-1-(5-phospho-D-ribosyl)imidazole-4-carboxamide from 5-amino-1-(5-phospho-D-ribosyl)imidazole-4-carboxylate: step 1/2. This chain is Phosphoribosylaminoimidazole-succinocarboxamide synthase, found in Thermotoga petrophila (strain ATCC BAA-488 / DSM 13995 / JCM 10881 / RKU-1).